Here is a 729-residue protein sequence, read N- to C-terminus: MPLVVPHAAMPEGRLMTAASRRSASPLPTLATWALWLLGALLLVFVVAVPMDVTQQLVFSGVLFAVALAVRNRGGRVVILMMMGMSLAVSCRYIWWRMTQTMGVGSAVDFILGLGLLGAELYAFVILVLGYFQVLWPLNRKPVPLPADQRLWPSVDVFIPTYNEPLSVVRTTVLAASVIDWPAGKITIHLLDDGRRDEFRAFCAEVGINYVTRTNNAHAKAGNINAALKKCSGDYVAIFDCDHIPTRSFLQVAMGWFLHDTKLALVQMPHYFFSPDPFERNLDTHGKVPNEGELFYGLLQDGNDQWNATFFCGSCAVIKRTALEEVGGVAVETVTEDAHTALKLQRRGYRTAYLAVPQAAGLATESLSGHVAQRIRWARGMAQIARIDNPLLGRGLKLSQRLCYLNAMLHFFYGVPRIIYLTAPLAYLFFGAHVIQASALMILAYALPHILQANLTNLRVQSRFRHLLWNEVYETTLAWYIFRPTLVALLNPKLGKFNVTPKGGLVARSYFDAQIAKPYLFLLLLNVVGMVAGVLRLIYVGGSGEQQTIWFNLAWTLYNMVLLGATIATASETRQVRSAHRVPLDVPVTLYLPDGDVLPSRSVNFSTGGMAIMLAQPQPIEPGLPVQIGLSHRGVEQTLPAVVRQDRDGQVSIQFTQMSMEQERWLVASTFARADIWLSQWGQHDRDAFWRSMGQVLEASARGFGRLGGHIVDSARQGFRPRRAVDLES.

A run of 3 helical transmembrane segments spans residues 30-50, 110-130, and 171-191; these read LATW…VAVP, FILG…LVLG, and TTVL…IHLL. The segment at 151 to 244 is catalytic subdomain A; it reads LWPSVDVFIP…YVAIFDCDHI (94 aa). The active site involves aspartate 193. The substrate site is built by aspartate 240 and aspartate 242. The segment at 321-381 is catalytic subdomain B; the sequence is TALEEVGGVA…AQRIRWARGM (61 aa). The active site involves aspartate 337. Transmembrane regions (helical) follow at residues 405-425, 427-447, 520-540, 549-569, and 610-630; these read LNAM…TAPL, YLFF…AYAL, LFLL…LIYV, IWFN…TIAT, and MAIM…QIGL. One can recognise a PilZ domain in the interval 575–671; sequence QVRSAHRVPL…QERWLVASTF (97 aa).

This sequence belongs to the glycosyltransferase 2 family. The cofactor is Mg(2+).

The protein localises to the cell inner membrane. The enzyme catalyses [(1-&gt;4)-beta-D-glucosyl](n) + UDP-alpha-D-glucose = [(1-&gt;4)-beta-D-glucosyl](n+1) + UDP + H(+). It functions in the pathway glycan metabolism; bacterial cellulose biosynthesis. Activated by bis-(3'-5') cyclic diguanylic acid (c-di-GMP). Catalytic subunit of cellulose synthase. It polymerizes uridine 5'-diphosphate glucose to cellulose, which is produced as an extracellular component for mechanical and chemical protection. This Xanthomonas axonopodis pv. citri (strain 306) protein is Cellulose synthase catalytic subunit [UDP-forming] (bcsA).